A 160-amino-acid chain; its full sequence is Nucleotide-binding protein Tgr7_1196 (160 aa).

Belongs to the YajQ family.

Its function is as follows. Nucleotide-binding protein. The protein is Nucleotide-binding protein Tgr7_1196 of Thioalkalivibrio sulfidiphilus (strain HL-EbGR7).